A 485-amino-acid polypeptide reads, in one-letter code: D-alanine--D-alanyl carrier protein ligase (485 aa).

144–145 contacts ATP; the sequence is TS. Asp-189 is a D-alanine binding site. 284–289 is an ATP binding site; that stretch reads NTYGPT. Residue Val-293 participates in D-alanine binding. ATP contacts are provided by Asp-365 and Lys-473. Lys-473 lines the D-alanine pocket.

The protein belongs to the ATP-dependent AMP-binding enzyme family. DltA subfamily.

The protein localises to the cytoplasm. The catalysed reaction is holo-[D-alanyl-carrier protein] + D-alanine + ATP = D-alanyl-[D-alanyl-carrier protein] + AMP + diphosphate. Its pathway is cell wall biogenesis; lipoteichoic acid biosynthesis. Functionally, catalyzes the first step in the D-alanylation of lipoteichoic acid (LTA), the activation of D-alanine and its transfer onto the D-alanyl carrier protein (Dcp) DltC. In an ATP-dependent two-step reaction, forms a high energy D-alanyl-AMP intermediate, followed by transfer of the D-alanyl residue as a thiol ester to the phosphopantheinyl prosthetic group of the Dcp. D-alanylation of LTA plays an important role in modulating the properties of the cell wall in Gram-positive bacteria, influencing the net charge of the cell wall. This chain is D-alanine--D-alanyl carrier protein ligase, found in Staphylococcus epidermidis (strain ATCC 35984 / DSM 28319 / BCRC 17069 / CCUG 31568 / BM 3577 / RP62A).